The sequence spans 92 residues: Small ribosomal subunit protein uS19 (92 aa).

This sequence belongs to the universal ribosomal protein uS19 family.

Protein S19 forms a complex with S13 that binds strongly to the 16S ribosomal RNA. The protein is Small ribosomal subunit protein uS19 of Oceanobacillus iheyensis (strain DSM 14371 / CIP 107618 / JCM 11309 / KCTC 3954 / HTE831).